Here is a 373-residue protein sequence, read N- to C-terminus: 3-dehydroquinate synthase (373 aa).

NAD(+) is bound by residues 67-72 (EGEQAK), 101-105 (GVVLD), 125-126 (TT), Lys-138, and Lys-147. Zn(2+) is bound by residues Glu-180, His-240, and His-256.

The protein belongs to the sugar phosphate cyclases superfamily. Dehydroquinate synthase family. The cofactor is NAD(+). Co(2+) is required as a cofactor. It depends on Zn(2+) as a cofactor.

It localises to the cytoplasm. The catalysed reaction is 7-phospho-2-dehydro-3-deoxy-D-arabino-heptonate = 3-dehydroquinate + phosphate. It functions in the pathway metabolic intermediate biosynthesis; chorismate biosynthesis; chorismate from D-erythrose 4-phosphate and phosphoenolpyruvate: step 2/7. Functionally, catalyzes the conversion of 3-deoxy-D-arabino-heptulosonate 7-phosphate (DAHP) to dehydroquinate (DHQ). The sequence is that of 3-dehydroquinate synthase (aroB) from Chlamydia muridarum (strain MoPn / Nigg).